We begin with the raw amino-acid sequence, 1368 residues long: MAVAEAKPQYSHAEKKRFRKSFGKQTDIMPIPNLLEIQLKSYRDFLQTDTKLSEQLNTGLHAAFSSVFPIESFSGNARLEYVGYKLGEPAFDVRECKLRGLTYSAPLRVKIRLVVLDKDASDDPKPIKDIREQDVFMGEIPLMTDVGTFVVNGTERVVVSQLHRSPGVIFEHDKGKTHSSGKLLYSARIIPYRGSWLDFEFDPKDCVYVRIDRRRKLPVTILLRALGYEAEDILSEFFETTRCHLKNGEYHIDLIPQRLRGEIASFDIHVPETGELIVEQGRRITARHIKQMEKSQMQDLVVPRDYLIGKTLAKNIIDTSTGEFLAQANDEITEELLDAMANHGILQIDMIYTNDLDHGSYISDTLKIDPTGSQLEALVEIYRMMRPGEPPTKEAAEALFKNLFFVEERYDLSAVGRMKFNRRVGIKSDEGPGTLTKEDILSVIKTLIDIRNGIGMVDDIDHLGNRRVRSVGEMTENQFRVGLVRVERAVKERLSLVESENLMPQDLINAKPVSAAIKEFFGSSQLSQFMDQVNPLSGVTHKRRVSALGPGGLTRERAGFEVRDVHTTHYGRVCPIETPEGPNIGLINSLSVYARTNEYGFIETPCRKVVNGRVTDEVEYLSAIEEVDQYIAQSNVELDAQGNILADLVPCRHQNEFSLTTPDKINYMDVSPKQIVSVAASLIPFLEHDDANRALMGSNMQRQAVPTLRSEKPLVGTGMERIVASDSGVSVVAKRGGVIDLVDASRIVVRVNDDETTAGETGVDIYNLTKYFRSNQDTCINQRPIVSTGDRIQRGDVLADGPCTDMGELALGQNLLVAFMPWNGYNFEDSILISERIVHDDRFTTIHIEELTCIARDTKLGTEEITADIPNVGESALSNLDESGVVYIGAEVKAGDILVGKVTPKGETQLTPEEKLLRAIFGEKASDVKDSSLRVPSGMNGTVIDVQVFTRDGLEKDARAKSIEEEHLARVRKDLIDERRIREEDIYHRVSHLLLDKVATGGPGSLKPGSKITQDYLDKVEREKWFDIRIEDDAVSQQLEQLSKQLELLTKEMEKRFNDSRKKIIQGDDLAPGVLKIVKVYLAVKRRIQPGDKMAGRHGNKGVISIVVPVEDMPHMEDGTAVDIVLNPLGVPSRMNIGQVLETHLGLAAKGLGRKIAQMLDERQTPEAIKAYLEKIYNHDGVQRVNLKCLNDDELMTLADNLRAGVPMATPVFDGATEQEIKSMLQLADLPADGKTVLIDGRTGNKFDNPVTVGYMYMLKLNHLVDDKMHARSTGSYSLVTQQPLGGKAQFGGQRFGEMEVWALEAYGAAYTLQEMLTVKSDDVGGRTKIYKNIVDGDHRMDPGMPESFNVLLKEIRALGIDIELEHD.

It belongs to the RNA polymerase beta chain family. As to quaternary structure, the RNAP catalytic core consists of 2 alpha, 1 beta, 1 beta' and 1 omega subunit. When a sigma factor is associated with the core the holoenzyme is formed, which can initiate transcription.

The enzyme catalyses RNA(n) + a ribonucleoside 5'-triphosphate = RNA(n+1) + diphosphate. DNA-dependent RNA polymerase catalyzes the transcription of DNA into RNA using the four ribonucleoside triphosphates as substrates. The chain is DNA-directed RNA polymerase subunit beta from Legionella pneumophila (strain Corby).